Reading from the N-terminus, the 412-residue chain is Isovaleryl-CoA dehydrogenase, mitochondrial (412 aa).

The N-terminal 25 residues, 1–25, are a transit peptide targeting the mitochondrion; the sequence is MHKLFVARSVKSALFRIKNHQKPQF. Residues 154–163 and 187–189 contribute to the FAD site; these read LAMSEPNAGS and WCT. Residue S163 coordinates substrate. Substrate is bound by residues 209-210, Y264, and 271-274; these read SK and DLER. Residue E273 is the Proton acceptor of the active site. Residues R299, Q310, and 367-371 each bind FAD; that span reads QCLGG. Residue 394–395 participates in substrate binding; it reads AG. 396-398 contributes to the FAD binding site; it reads TSE.

The protein belongs to the acyl-CoA dehydrogenase family. In terms of assembly, homotetramer. Requires FAD as cofactor. As to expression, expressed in flowers and tubers.

It localises to the mitochondrion. It catalyses the reaction 3-methylbutanoyl-CoA + oxidized [electron-transfer flavoprotein] + H(+) = 3-methylbut-2-enoyl-CoA + reduced [electron-transfer flavoprotein]. It participates in amino-acid degradation; L-leucine degradation; (S)-3-hydroxy-3-methylglutaryl-CoA from 3-isovaleryl-CoA: step 1/3. Its function is as follows. Involved in the catabolism of amino acids. Uses isovaleryl-CoA as substrate. Minor activity detected with 2-methylpalmitoyl-CoA or 2-methylbutanoyl-CoA, but no activity with short- and medium-straight chain acyl-CoA esters or with 2-methylhexanoyl-CoA. The chain is Isovaleryl-CoA dehydrogenase, mitochondrial (IVD) from Solanum tuberosum (Potato).